Consider the following 104-residue polypeptide: Large ribosomal subunit protein bL21 (104 aa).

Belongs to the bacterial ribosomal protein bL21 family. Part of the 50S ribosomal subunit. Contacts protein L20.

Its function is as follows. This protein binds to 23S rRNA in the presence of protein L20. The protein is Large ribosomal subunit protein bL21 of Opitutus terrae (strain DSM 11246 / JCM 15787 / PB90-1).